The sequence spans 461 residues: Bifunctional protein GlmU (461 aa).

Positions 1-243 (MNATVPSAAP…EDELRGINSR (243 aa)) are pyrophosphorylase. UDP-N-acetyl-alpha-D-glucosamine is bound by residues 24–27 (LAAG), K38, Q86, 91–92 (GT), 112–114 (YGD), G155, E169, N184, and N241. D114 contacts Mg(2+). N241 provides a ligand contact to Mg(2+). A linker region spans residues 244-264 (AELAEAEACVQRRLRAAALDG). The N-acetyltransferase stretch occupies residues 265 to 461 (GATLVAPETV…AALRRKKEQG (197 aa)). Residues R330 and K348 each coordinate UDP-N-acetyl-alpha-D-glucosamine. Catalysis depends on H360, which acts as the Proton acceptor. The UDP-N-acetyl-alpha-D-glucosamine site is built by Y363 and N374. Residues A377, 383 to 384 (NY), S402, A420, and R437 each bind acetyl-CoA.

The protein in the N-terminal section; belongs to the N-acetylglucosamine-1-phosphate uridyltransferase family. This sequence in the C-terminal section; belongs to the transferase hexapeptide repeat family. In terms of assembly, homotrimer. Requires Mg(2+) as cofactor.

The protein localises to the cytoplasm. The enzyme catalyses alpha-D-glucosamine 1-phosphate + acetyl-CoA = N-acetyl-alpha-D-glucosamine 1-phosphate + CoA + H(+). The catalysed reaction is N-acetyl-alpha-D-glucosamine 1-phosphate + UTP + H(+) = UDP-N-acetyl-alpha-D-glucosamine + diphosphate. The protein operates within nucleotide-sugar biosynthesis; UDP-N-acetyl-alpha-D-glucosamine biosynthesis; N-acetyl-alpha-D-glucosamine 1-phosphate from alpha-D-glucosamine 6-phosphate (route II): step 2/2. It functions in the pathway nucleotide-sugar biosynthesis; UDP-N-acetyl-alpha-D-glucosamine biosynthesis; UDP-N-acetyl-alpha-D-glucosamine from N-acetyl-alpha-D-glucosamine 1-phosphate: step 1/1. Its pathway is bacterial outer membrane biogenesis; LPS lipid A biosynthesis. Functionally, catalyzes the last two sequential reactions in the de novo biosynthetic pathway for UDP-N-acetylglucosamine (UDP-GlcNAc). The C-terminal domain catalyzes the transfer of acetyl group from acetyl coenzyme A to glucosamine-1-phosphate (GlcN-1-P) to produce N-acetylglucosamine-1-phosphate (GlcNAc-1-P), which is converted into UDP-GlcNAc by the transfer of uridine 5-monophosphate (from uridine 5-triphosphate), a reaction catalyzed by the N-terminal domain. This is Bifunctional protein GlmU from Gluconacetobacter diazotrophicus (strain ATCC 49037 / DSM 5601 / CCUG 37298 / CIP 103539 / LMG 7603 / PAl5).